The sequence spans 181 residues: Ribosome maturation factor RimM (181 aa).

A PRC barrel domain is found at 98–177; it reads EGEFFYCDLI…KITTHNAKTL (80 aa).

It belongs to the RimM family. As to quaternary structure, binds ribosomal protein uS19.

The protein resides in the cytoplasm. An accessory protein needed during the final step in the assembly of 30S ribosomal subunit, possibly for assembly of the head region. Essential for efficient processing of 16S rRNA. May be needed both before and after RbfA during the maturation of 16S rRNA. It has affinity for free ribosomal 30S subunits but not for 70S ribosomes. The protein is Ribosome maturation factor RimM of Helicobacter pylori (strain J99 / ATCC 700824) (Campylobacter pylori J99).